A 346-amino-acid polypeptide reads, in one-letter code: Anthranilate phosphoribosyltransferase (346 aa).

5-phospho-alpha-D-ribose 1-diphosphate is bound by residues Gly-81, Gly-84–Asp-85, Asn-91–Thr-94, Lys-109–Ser-117, and Ser-121. Gly-81 provides a ligand contact to anthranilate. Ser-93 serves as a coordination point for Mg(2+). Arg-167 serves as a coordination point for anthranilate. The Mg(2+) site is built by Asp-226 and Glu-227.

It belongs to the anthranilate phosphoribosyltransferase family. Homodimer. Mg(2+) serves as cofactor.

It catalyses the reaction N-(5-phospho-beta-D-ribosyl)anthranilate + diphosphate = 5-phospho-alpha-D-ribose 1-diphosphate + anthranilate. It functions in the pathway amino-acid biosynthesis; L-tryptophan biosynthesis; L-tryptophan from chorismate: step 2/5. Catalyzes the transfer of the phosphoribosyl group of 5-phosphorylribose-1-pyrophosphate (PRPP) to anthranilate to yield N-(5'-phosphoribosyl)-anthranilate (PRA). The chain is Anthranilate phosphoribosyltransferase from Marinomonas sp. (strain MWYL1).